Consider the following 335-residue polypeptide: Succinylglutamate desuccinylase (335 aa).

3 residues coordinate Zn(2+): H59, E62, and H151. E215 is an active-site residue.

Belongs to the AspA/AstE family. Succinylglutamate desuccinylase subfamily. Requires Zn(2+) as cofactor.

The enzyme catalyses N-succinyl-L-glutamate + H2O = L-glutamate + succinate. Its pathway is amino-acid degradation; L-arginine degradation via AST pathway; L-glutamate and succinate from L-arginine: step 5/5. In terms of biological role, transforms N(2)-succinylglutamate into succinate and glutamate. The protein is Succinylglutamate desuccinylase of Pseudomonas putida (strain GB-1).